The following is a 182-amino-acid chain: Photosystem I assembly protein Ycf4 (182 aa).

The next 2 helical transmembrane spans lie at 22 to 42 (WAII…SSYL) and 66 to 86 (FYGI…LFSV).

Belongs to the Ycf4 family.

It localises to the plastid. Its subcellular location is the chloroplast thylakoid membrane. Seems to be required for the assembly of the photosystem I complex. The sequence is that of Photosystem I assembly protein Ycf4 from Tupiella akineta (Green alga).